We begin with the raw amino-acid sequence, 410 residues long: Chaperonin GroEL (410 aa).

ATP is bound by residues 29 to 32 (TAGP), Lys-50, and 86 to 90 (DGTTT).

Belongs to the chaperonin (HSP60) family. Forms a cylinder of 14 subunits composed of two heptameric rings stacked back-to-back. Interacts with the co-chaperonin GroES.

It is found in the cytoplasm. It carries out the reaction ATP + H2O + a folded polypeptide = ADP + phosphate + an unfolded polypeptide.. In terms of biological role, together with its co-chaperonin GroES, plays an essential role in assisting protein folding. The GroEL-GroES system forms a nano-cage that allows encapsulation of the non-native substrate proteins and provides a physical environment optimized to promote and accelerate protein folding. The protein is Chaperonin GroEL of Ehrlichia canis.